A 469-amino-acid chain; its full sequence is 3-isopropylmalate dehydratase large subunit (469 aa).

Positions 346, 406, and 409 each coordinate [4Fe-4S] cluster.

It belongs to the aconitase/IPM isomerase family. LeuC type 1 subfamily. As to quaternary structure, heterodimer of LeuC and LeuD. It depends on [4Fe-4S] cluster as a cofactor.

The enzyme catalyses (2R,3S)-3-isopropylmalate = (2S)-2-isopropylmalate. The protein operates within amino-acid biosynthesis; L-leucine biosynthesis; L-leucine from 3-methyl-2-oxobutanoate: step 2/4. Its function is as follows. Catalyzes the isomerization between 2-isopropylmalate and 3-isopropylmalate, via the formation of 2-isopropylmaleate. This is 3-isopropylmalate dehydratase large subunit from Lysinibacillus sphaericus (strain C3-41).